The chain runs to 336 residues: Calcium uniporter protein 3, mitochondrial (336 aa).

A mitochondrion-targeting transit peptide spans 1-69; the sequence is MAMRKLLSKK…RFMHNSAMIR (69 aa). A run of 2 helical transmembrane segments spans residues 231-251 and 257-277; these read LWAG…LTFW and VMEP…YAFF. A Selectivity filter motif is present at residues 255–263; it reads WDVMEPICF. Glutamate 259 is a binding site for Ca(2+).

This sequence belongs to the MCU (TC 1.A.77) family.

Its subcellular location is the mitochondrion inner membrane. The catalysed reaction is Ca(2+)(in) = Ca(2+)(out). Mitochondrial inner membrane calcium uniporter that mediates calcium uptake into mitochondria. Constitutes a pore-forming and calcium-conducting subunit. Mitochondrial calcium homeostasis plays key roles in cellular physiology and regulates cell bioenergetics, cytoplasmic calcium signals and activation of cell death pathways. This chain is Calcium uniporter protein 3, mitochondrial, found in Arabidopsis thaliana (Mouse-ear cress).